A 217-amino-acid polypeptide reads, in one-letter code: Elongation factor Ts (217 aa).

The tract at residues 82–85 (TDFV) is involved in Mg(2+) ion dislocation from EF-Tu.

This sequence belongs to the EF-Ts family.

It is found in the cytoplasm. Its function is as follows. Associates with the EF-Tu.GDP complex and induces the exchange of GDP to GTP. It remains bound to the aminoacyl-tRNA.EF-Tu.GTP complex up to the GTP hydrolysis stage on the ribosome. This Synechococcus sp. (strain RCC307) protein is Elongation factor Ts.